The primary structure comprises 244 residues: ATP synthase subunit a (244 aa).

7 helical membrane passes run 20 to 40, 81 to 101, 113 to 133, 140 to 160, 176 to 196, 202 to 222, and 223 to 243; these read FFDISITTITVYLGLLMVIVI, GILFFPFIMSLFLFVLTLNVM, QLLVTFTLAITIMIGITIWGF, FLNIFVPSGIEPWLLPLLVFI, LFANMLAGHLLIHIIGVAAIY, FIGILPWICVIAFMFLELGIA, and FLQAYVFVLLTLIYIANIINL.

This sequence belongs to the ATPase A chain family. F-type ATPases have 2 components, CF(1) - the catalytic core - and CF(0) - the membrane proton channel. CF(1) has five subunits: alpha(3), beta(3), gamma(1), delta(1), epsilon(1). CF(0) has three main subunits: a, b and c.

It localises to the mitochondrion inner membrane. Mitochondrial membrane ATP synthase (F(1)F(0) ATP synthase or Complex V) produces ATP from ADP in the presence of a proton gradient across the membrane which is generated by electron transport complexes of the respiratory chain. F-type ATPases consist of two structural domains, F(1) - containing the extramembraneous catalytic core and F(0) - containing the membrane proton channel, linked together by a central stalk and a peripheral stalk. During catalysis, ATP synthesis in the catalytic domain of F(1) is coupled via a rotary mechanism of the central stalk subunits to proton translocation. Key component of the proton channel; it may play a direct role in the translocation of protons across the membrane. This chain is ATP synthase subunit a (atp6), found in Dictyostelium discoideum (Social amoeba).